The chain runs to 1046 residues: DNA-directed RNA polymerase subunit beta' (1046 aa).

Positions 383, 385, and 387 each coordinate Mg(2+). Residues Cys752, Cys826, Cys833, and Cys836 each coordinate Zn(2+).

This sequence belongs to the RNA polymerase beta' chain family. In terms of assembly, the RNAP catalytic core consists of 2 alpha, 1 beta, 1 beta' and 1 omega subunit. When a sigma factor is associated with the core the holoenzyme is formed, which can initiate transcription. The cofactor is Mg(2+). Requires Zn(2+) as cofactor.

It catalyses the reaction RNA(n) + a ribonucleoside 5'-triphosphate = RNA(n+1) + diphosphate. In terms of biological role, DNA-dependent RNA polymerase catalyzes the transcription of DNA into RNA using the four ribonucleoside triphosphates as substrates. This is DNA-directed RNA polymerase subunit beta' from Weissella hellenica.